The following is a 134-amino-acid chain: Cytochrome b (134 aa).

3 helical membrane passes run Phe33–Met53, Trp77–Val98, and Trp113–Leu133. Heme b contacts are provided by His83 and His97.

Belongs to the cytochrome b family. The cytochrome bc1 complex contains 11 subunits: 3 respiratory subunits (MT-CYB, CYC1 and UQCRFS1), 2 core proteins (UQCRC1 and UQCRC2) and 6 low-molecular weight proteins (UQCRH/QCR6, UQCRB/QCR7, UQCRQ/QCR8, UQCR10/QCR9, UQCR11/QCR10 and a cleavage product of UQCRFS1). This cytochrome bc1 complex then forms a dimer. The cofactor is heme b.

Its subcellular location is the mitochondrion inner membrane. Functionally, component of the ubiquinol-cytochrome c reductase complex (complex III or cytochrome b-c1 complex) that is part of the mitochondrial respiratory chain. The b-c1 complex mediates electron transfer from ubiquinol to cytochrome c. Contributes to the generation of a proton gradient across the mitochondrial membrane that is then used for ATP synthesis. In Rhinolophus hipposideros (Lesser horseshoe bat), this protein is Cytochrome b (MT-CYB).